The sequence spans 173 residues: Adenine phosphoribosyltransferase (173 aa).

Belongs to the purine/pyrimidine phosphoribosyltransferase family. As to quaternary structure, homodimer.

It is found in the cytoplasm. It catalyses the reaction AMP + diphosphate = 5-phospho-alpha-D-ribose 1-diphosphate + adenine. It functions in the pathway purine metabolism; AMP biosynthesis via salvage pathway; AMP from adenine: step 1/1. In terms of biological role, catalyzes a salvage reaction resulting in the formation of AMP, that is energically less costly than de novo synthesis. The sequence is that of Adenine phosphoribosyltransferase from Caldanaerobacter subterraneus subsp. tengcongensis (strain DSM 15242 / JCM 11007 / NBRC 100824 / MB4) (Thermoanaerobacter tengcongensis).